Reading from the N-terminus, the 247-residue chain is Probable transcriptional regulatory protein ABO_0750 (247 aa).

This sequence belongs to the TACO1 family.

It is found in the cytoplasm. This Alcanivorax borkumensis (strain ATCC 700651 / DSM 11573 / NCIMB 13689 / SK2) protein is Probable transcriptional regulatory protein ABO_0750.